The sequence spans 391 residues: MTEPETLALLDMKEPETPEKSPPQALVLQSEEEGGTESPGTESLRVGSSVGSPIVREGPEDGPDSTISEAATLPWGTDPHPSAPLPDPPGWRDIEPEPLESEAPTKSEEPFKEDANLLPEKTVRAFVPIDLQCIERKPQEERILHRDAGPGELRNFLPARLSHPEPPERKWAEAVVRPPGRSCGGCGSCGGREALRAVASVVAALIFFPCLLYGAYAFLPFDAPRLPTMSSRLVYTLRCGVFATFPIVLGLLVYGLSLLCFSALRPFGEPRREVEIHRQYVAQSVQLFILYFFNLAVLSTYLPQDTLKLLPLLTGLFAISRLIYWLTFAVGRSFRGFGYGLTFLPLLAMLVWNLYYMFVVEPERMLTASESRLDYPDHARSVSDYRPRSWG.

Residues 1 to 114 form a disordered region; the sequence is MTEPETLALL…TKSEEPFKED (114 aa). Residues 1–200 are Cytoplasmic-facing; the sequence is MTEPETLALL…GREALRAVAS (200 aa). Residues 103–114 show a composition bias toward basic and acidic residues; it reads APTKSEEPFKED. The chain crosses the membrane as a helical span at residues 201–221; that stretch reads VVAALIFFPCLLYGAYAFLPF. The Extracellular portion of the chain corresponds to 222 to 240; the sequence is DAPRLPTMSSRLVYTLRCG. Residues 241–261 traverse the membrane as a helical segment; the sequence is VFATFPIVLGLLVYGLSLLCF. Over 262–279 the chain is Cytoplasmic; it reads SALRPFGEPRREVEIHRQ. The helical transmembrane segment at 280-300 threads the bilayer; it reads YVAQSVQLFILYFFNLAVLST. The Extracellular segment spans residues 301-309; it reads YLPQDTLKL. Residues 310-330 traverse the membrane as a helical segment; it reads LPLLTGLFAISRLIYWLTFAV. Residues 331 to 339 are Cytoplasmic-facing; that stretch reads GRSFRGFGY. Residues 340–360 form a helical membrane-spanning segment; that stretch reads GLTFLPLLAMLVWNLYYMFVV. Topologically, residues 361-391 are extracellular; it reads EPERMLTASESRLDYPDHARSVSDYRPRSWG.

In terms of tissue distribution, expressed in the epidermis of the skin. Expressed in epithelial cells of the outermost layer of the stratum granulosum (SG) and in hair follicles (at protein level).

The protein resides in the lysosome. It localises to the golgi apparatus. It is found in the trans-Golgi network. The protein localises to the membrane. Its function is as follows. Contributes to the epidermal integrity and skin barrier function. Plays a role in the lamellar granule (LG) secretory system and in the stratum corneum (SC) epithelial cell formation. In Mus musculus (Mouse), this protein is Transmembrane protein 79 (Tmem79).